Here is a 580-residue protein sequence, read N- to C-terminus: Pentatricopeptide repeat-containing protein At5g10690 (580 aa).

PPR repeat units follow at residues 76 to 110, 112 to 142, 151 to 181, 189 to 223, 224 to 254, 266 to 296, 302 to 337, 342 to 376, and 382 to 417; these read NTIV…GGIG, DSIS…IEYG, SSSL…YDIL, SVLI…RLEP, DRLT…MKEK, DVVT…MKLC, DRTA…GANE, KPHL…SSGS, and QQEA…KTIP. The CBS domain occupies 486-553; the sequence is VPIVDDRGSC…IVVHCGNFSG (68 aa).

Belongs to the PPR family. P subfamily.

This chain is Pentatricopeptide repeat-containing protein At5g10690 (CBSPPR1), found in Arabidopsis thaliana (Mouse-ear cress).